The chain runs to 670 residues: Probable plastid-lipid-associated protein 14, chloroplastic (670 aa).

The N-terminal 52 residues, Met1–Ser52, are a transit peptide targeting the chloroplast. The Protein kinase domain occupies Phe88–Leu399.

It belongs to the PAP/fibrillin family. In terms of processing, not autophosphorylated. In terms of tissue distribution, expressed in roots.

The protein localises to the plastid. The protein resides in the chloroplast. In terms of biological role, directly regulated by DOF3.6/OBP3; unknown function. This chain is Probable plastid-lipid-associated protein 14, chloroplastic (PAP14), found in Arabidopsis thaliana (Mouse-ear cress).